The sequence spans 113 residues: MKTTLIFCILGIVIPTAVVSSQDFCGLSQQEREDYWECVERGMSADELNQAKLFLECINKQSAVELLAFFCNADSIEDSIEKEEFRLLFAECLKSHPASFNAGNESCLKEARK.

Positions 1–21 (MKTTLIFCILGIVIPTAVVSS) are cleaved as a signal peptide.

In terms of processing, contains 3 disulfide bonds. Expressed by the venom gland.

The protein localises to the secreted. The chain is Venom protein 184 from Lychas mucronatus (Chinese swimming scorpion).